The following is a 268-amino-acid chain: Secreted RxLR effector protein 32 (268 aa).

The N-terminal stretch at 1–21 (MRGAYYVAFALLVAASTRTAA) is a signal peptide. The RxLR-dEER motif lies at 50–71 (RILRESPDPKDRLPVYASDEER). Positions 120 to 257 (PKLEIKKSKR…PTPESLGIGG (138 aa)) are disordered. Residues 148–161 (SNSKKSLVSSASAK) are compositionally biased toward low complexity. The span at 212–224 (NLDKNKRPDEAKI) shows a compositional bias: basic and acidic residues.

Belongs to the RxLR effector family.

Its subcellular location is the secreted. It is found in the host cell. Secreted effector that completely suppresses the host cell death induced by cell death-inducing proteins. In Plasmopara viticola (Downy mildew of grapevine), this protein is Secreted RxLR effector protein 32.